A 64-amino-acid polypeptide reads, in one-letter code: SPbeta prophage-derived uncharacterized protein YoqI (64 aa).

In Bacillus subtilis (strain 168), this protein is SPbeta prophage-derived uncharacterized protein YoqI (yoqI).